The following is a 310-amino-acid chain: ATP-dependent protease (310 aa).

The region spanning 24 to 186 (RLNQCFFKFK…TPNQKEENYF (163 aa)) is the Integrase catalytic domain.

The chain is ATP-dependent protease from Lactococcus lactis subsp. lactis (Streptococcus lactis).